The following is a 117-amino-acid chain: Large ribosomal subunit protein bL20 (117 aa).

Belongs to the bacterial ribosomal protein bL20 family.

In terms of biological role, binds directly to 23S ribosomal RNA and is necessary for the in vitro assembly process of the 50S ribosomal subunit. It is not involved in the protein synthesizing functions of that subunit. The chain is Large ribosomal subunit protein bL20 from Solidesulfovibrio magneticus (strain ATCC 700980 / DSM 13731 / RS-1) (Desulfovibrio magneticus).